Here is a 536-residue protein sequence, read N- to C-terminus: GATA zinc finger domain-containing protein 9 (536 aa).

Composition is skewed to polar residues over residues 1 to 20 and 36 to 55; these read MTSF…QPHS and CQSS…NPNA. Disordered regions lie at residues 1-77, 183-211, 237-258, 273-342, and 370-423; these read MTSF…LSGS, SSSL…VVRS, RSAF…GGGS, QLHY…GFVQ, and ALFS…NISS. The span at 56–72 shows a compositional bias: low complexity; the sequence is TTNNTTTTTTTTTTTTN. Residues 188–206 show a composition bias toward acidic residues; that stretch reads SEDDDCCYETEEDDNGEDG. Residues 237 to 247 show a composition bias toward basic residues; it reads RSAFKKNKKDY. The segment covering 273–283 has biased composition (polar residues); that stretch reads QLHYSNSMTDN. Low complexity-rich tracts occupy residues 318–335 and 379–399; these read SNSN…NNNN and PSPT…NSGN. The GATA-type zinc finger occupies 479-504; the sequence is CRHCGTTDTPEWRRGPDGRKSLCNAC.

In Dictyostelium discoideum (Social amoeba), this protein is GATA zinc finger domain-containing protein 9 (gtaI).